A 229-amino-acid chain; its full sequence is Heptaprenylglyceryl phosphate synthase (229 aa).

Lys-12 contacts sn-glycerol 1-phosphate. Asp-14 and Ser-40 together coordinate Mg(2+). Sn-glycerol 1-phosphate contacts are provided by residues Tyr-159–Gly-164, Gly-189, and Gly-209–Asn-210.

Belongs to the GGGP/HepGP synthase family. Group I subfamily. In terms of assembly, homodimer. It depends on Mg(2+) as a cofactor.

The enzyme catalyses sn-glycerol 1-phosphate + all-trans-heptaprenyl diphosphate = 3-heptaprenyl-sn-glycero-1-phosphate + diphosphate. It functions in the pathway membrane lipid metabolism; glycerophospholipid metabolism. Its function is as follows. Prenyltransferase that catalyzes in vivo the transfer of the heptaprenyl moiety of heptaprenyl pyrophosphate (HepPP; 35 carbon atoms) to the C3 hydroxyl of sn-glycerol-1-phosphate (G1P), producing heptaprenylglyceryl phosphate (HepGP). This reaction is an ether-bond-formation step in the biosynthesis of archaea-type G1P-based membrane lipids found in Bacillales. This Bacillus cereus (strain G9842) protein is Heptaprenylglyceryl phosphate synthase.